A 246-amino-acid polypeptide reads, in one-letter code: Ribonuclease 3 (246 aa).

The 126-residue stretch at 10–135 (LENFLTLNNI…FVAAIYLDLG (126 aa)) folds into the RNase III domain. Residue Glu50 participates in Mg(2+) binding. Asp54 is a catalytic residue. 2 residues coordinate Mg(2+): Asp121 and Glu124. Glu124 is a catalytic residue. The region spanning 161-230 (DPKSSFQEYI…ATRALETLKA (70 aa)) is the DRBM domain.

Belongs to the ribonuclease III family. Homodimer. Mg(2+) is required as a cofactor.

It localises to the cytoplasm. It carries out the reaction Endonucleolytic cleavage to 5'-phosphomonoester.. In terms of biological role, digests double-stranded RNA. Involved in the processing of primary rRNA transcript to yield the immediate precursors to the large and small rRNAs (23S and 16S). Processes some mRNAs, and tRNAs when they are encoded in the rRNA operon. Processes pre-crRNA and tracrRNA of type II CRISPR loci if present in the organism. The polypeptide is Ribonuclease 3 (Mycoplasma mobile (strain ATCC 43663 / 163K / NCTC 11711) (Mesomycoplasma mobile)).